The chain runs to 252 residues: Imidazole glycerol phosphate synthase subunit HisF (252 aa).

Catalysis depends on residues Asp11 and Asp130.

This sequence belongs to the HisA/HisF family. Heterodimer of HisH and HisF.

It is found in the cytoplasm. The enzyme catalyses 5-[(5-phospho-1-deoxy-D-ribulos-1-ylimino)methylamino]-1-(5-phospho-beta-D-ribosyl)imidazole-4-carboxamide + L-glutamine = D-erythro-1-(imidazol-4-yl)glycerol 3-phosphate + 5-amino-1-(5-phospho-beta-D-ribosyl)imidazole-4-carboxamide + L-glutamate + H(+). The protein operates within amino-acid biosynthesis; L-histidine biosynthesis; L-histidine from 5-phospho-alpha-D-ribose 1-diphosphate: step 5/9. IGPS catalyzes the conversion of PRFAR and glutamine to IGP, AICAR and glutamate. The HisF subunit catalyzes the cyclization activity that produces IGP and AICAR from PRFAR using the ammonia provided by the HisH subunit. The sequence is that of Imidazole glycerol phosphate synthase subunit HisF from Azoarcus sp. (strain BH72).